A 522-amino-acid polypeptide reads, in one-letter code: Probable G-protein coupled receptor egl-47 (522 aa).

The next 7 helical transmembrane spans lie at 140–160, 184–204, 238–258, 276–296, 345–365, 398–418, and 472–492; these read IIKLILYVNYIVLAVLLNSFL, ASMITATKPVINVFVIVLSAI, FVFFFTLLIIFFSALILKVVE, FILVPVLSLWNIIPLLYYHLY, PLLLFSLAWSLLVLCLTLYFL, ICWAAYQVVMAILHIIIICST, and LERTTFFTLISVIVTYSLLLF.

Belongs to the G-protein coupled receptor family. In terms of tissue distribution, expressed in some neurons in the head, the HSN neurons and the PVQ interneurons of the tail.

The protein localises to the membrane. Orphan receptor. Regulates egg-laying probably by activating guanine nucleotide-binding protein goa-1, in the hermaphrodite-specific neurons (HSNs). The polypeptide is Probable G-protein coupled receptor egl-47 (Caenorhabditis elegans).